A 280-amino-acid chain; its full sequence is 4-deoxy-L-threo-5-hexosulose-uronate ketol-isomerase (280 aa).

Positions 198, 200, 205, and 247 each coordinate Zn(2+).

It belongs to the KduI family. The cofactor is Zn(2+).

Its subcellular location is the cytoplasm. The catalysed reaction is 5-dehydro-4-deoxy-D-glucuronate = 3-deoxy-D-glycero-2,5-hexodiulosonate. Its function is as follows. Isomerase involved in ulvan degradation. Ulvan is the main polysaccharide component of the Ulvales (green seaweed) cell wall. It is composed of disaccharide building blocks comprising 3-sulfated rhamnose (Rha3S) linked to D-glucuronic acid (GlcA), L-iduronic acid (IduA), or D-xylose (Xyl). Catalyzes the isomerization of 5-dehydro-4-deoxy-D-glucuronate to 3-deoxy-D-glycero-2,5-hexodiulosonate. The sequence is that of 4-deoxy-L-threo-5-hexosulose-uronate ketol-isomerase from Formosa agariphila (strain DSM 15362 / KCTC 12365 / LMG 23005 / KMM 3901 / M-2Alg 35-1).